Here is a 258-residue protein sequence, read N- to C-terminus: Imidazole glycerol phosphate synthase subunit HisF (258 aa).

Active-site residues include D11 and D130.

This sequence belongs to the HisA/HisF family. Heterodimer of HisH and HisF.

It is found in the cytoplasm. It carries out the reaction 5-[(5-phospho-1-deoxy-D-ribulos-1-ylimino)methylamino]-1-(5-phospho-beta-D-ribosyl)imidazole-4-carboxamide + L-glutamine = D-erythro-1-(imidazol-4-yl)glycerol 3-phosphate + 5-amino-1-(5-phospho-beta-D-ribosyl)imidazole-4-carboxamide + L-glutamate + H(+). The protein operates within amino-acid biosynthesis; L-histidine biosynthesis; L-histidine from 5-phospho-alpha-D-ribose 1-diphosphate: step 5/9. IGPS catalyzes the conversion of PRFAR and glutamine to IGP, AICAR and glutamate. The HisF subunit catalyzes the cyclization activity that produces IGP and AICAR from PRFAR using the ammonia provided by the HisH subunit. This is Imidazole glycerol phosphate synthase subunit HisF from Xanthomonas oryzae pv. oryzae (strain MAFF 311018).